The chain runs to 99 residues: A-type ATP synthase subunit F (99 aa).

The protein belongs to the V-ATPase F subunit family. As to quaternary structure, has multiple subunits with at least A(3), B(3), C, D, E, F, H, I and proteolipid K(x).

Its subcellular location is the cell membrane. Component of the A-type ATP synthase that produces ATP from ADP in the presence of a proton gradient across the membrane. The sequence is that of A-type ATP synthase subunit F from Methanocella arvoryzae (strain DSM 22066 / NBRC 105507 / MRE50).